A 405-amino-acid polypeptide reads, in one-letter code: Putative polysaccharide ligase RT0347 (405 aa).

The next 10 helical transmembrane spans lie at 23 to 43 (IAAT…ISFI), 77 to 97 (LFIA…NSLV), 120 to 140 (ILYL…LFFI), 156 to 178 (FGLY…VIII), 201 to 221 (ISDS…FILA), 227 to 247 (IFFK…PIIA), 270 to 290 (LFIW…GYGF), 322 to 342 (ILQI…CLVY), 353 to 375 (ISNF…MISY), and 377 to 397 (IWQT…KLLV).

It belongs to the O-antigen ligase family.

The protein resides in the membrane. The sequence is that of Putative polysaccharide ligase RT0347 from Rickettsia typhi (strain ATCC VR-144 / Wilmington).